The sequence spans 123 residues: CD59A glycoprotein (123 aa).

The N-terminal stretch at 1-23 (MRAQRGLILLLLLLAVFCSTAVS) is a signal peptide. The region spanning 24 to 96 (LTCYHCFQPV…CCQFNLCNKS (73 aa)) is the UPAR/Ly6 domain. 5 disulfides stabilise this stretch: cysteine 26–cysteine 50, cysteine 29–cysteine 37, cysteine 43–cysteine 63, cysteine 69–cysteine 87, and cysteine 88–cysteine 93. Residue asparagine 40 is glycosylated (N-linked (GlcNAc...) asparagine). Residue asparagine 94 is glycosylated (N-linked (GlcNAc...) asparagine). Positions 97–123 (DGSLGKTPLLGTSVLVAILNLCFLSHL) are cleaved as a propeptide — removed in mature form.

In terms of assembly, interacts with T-cell surface antigen CD2. In terms of processing, N- and O-glycosylated. As to expression, expressed in all tissues examined (liver, kidney, spleen, thymus, brain and heart). Low levels in thymus. Also expressed in mononuclear cells, erythrocytes and platelets. Barely detected in neutrophils.

Its subcellular location is the cell membrane. It localises to the secreted. In terms of biological role, potent inhibitor of the complement membrane attack complex (MAC) action, which protects self-cells from damage during complement activation. Acts by binding to the beta-haipins of C8 (C8A and C8B) components of the assembling MAC, forming an intermolecular beta-sheet that prevents incorporation of the multiple copies of C9 required for complete formation of the osmolytic pore. The chain is CD59A glycoprotein from Mus musculus (Mouse).